The sequence spans 291 residues: 4-diphosphocytidyl-2-C-methyl-D-erythritol kinase (291 aa).

Lysine 11 is a catalytic residue. An ATP-binding site is contributed by 95-105 (PVAAGLAGGSS). The active site involves aspartate 137.

It belongs to the GHMP kinase family. IspE subfamily.

It carries out the reaction 4-CDP-2-C-methyl-D-erythritol + ATP = 4-CDP-2-C-methyl-D-erythritol 2-phosphate + ADP + H(+). It participates in isoprenoid biosynthesis; isopentenyl diphosphate biosynthesis via DXP pathway; isopentenyl diphosphate from 1-deoxy-D-xylulose 5-phosphate: step 3/6. Its function is as follows. Catalyzes the phosphorylation of the position 2 hydroxy group of 4-diphosphocytidyl-2C-methyl-D-erythritol. The polypeptide is 4-diphosphocytidyl-2-C-methyl-D-erythritol kinase (Alkaliphilus metalliredigens (strain QYMF)).